The chain runs to 465 residues: Iron-sulfur cluster assembly SufBD family protein SH2035 (465 aa).

The protein belongs to the iron-sulfur cluster assembly SufBD family.

In Staphylococcus haemolyticus (strain JCSC1435), this protein is Iron-sulfur cluster assembly SufBD family protein SH2035.